We begin with the raw amino-acid sequence, 148 residues long: uncharacterized protein (148 aa).

The next 2 membrane-spanning stretches (helical) occupy residues 16–36 (IVGAVIFSMSIIVILYISIIL) and 41–61 (LSFSIILAVDILIIALFAYIF).

This sequence to M.jannaschii MJ0696.

It localises to the cell membrane. This is an uncharacterized protein from Methanocaldococcus jannaschii (strain ATCC 43067 / DSM 2661 / JAL-1 / JCM 10045 / NBRC 100440) (Methanococcus jannaschii).